We begin with the raw amino-acid sequence, 329 residues long: Beta-ketoacyl-[acyl-carrier-protein] synthase III (329 aa).

Catalysis depends on residues C123 and H256. The interval 257–261 (QANIR) is ACP-binding. Residue N286 is part of the active site.

Belongs to the thiolase-like superfamily. FabH family. In terms of assembly, homodimer.

The protein resides in the cytoplasm. It carries out the reaction malonyl-[ACP] + acetyl-CoA + H(+) = 3-oxobutanoyl-[ACP] + CO2 + CoA. The protein operates within lipid metabolism; fatty acid biosynthesis. Functionally, catalyzes the condensation reaction of fatty acid synthesis by the addition to an acyl acceptor of two carbons from malonyl-ACP. Catalyzes the first condensation reaction which initiates fatty acid synthesis and may therefore play a role in governing the total rate of fatty acid production. Possesses both acetoacetyl-ACP synthase and acetyl transacylase activities. Its substrate specificity determines the biosynthesis of branched-chain and/or straight-chain of fatty acids. This Paraburkholderia phymatum (strain DSM 17167 / CIP 108236 / LMG 21445 / STM815) (Burkholderia phymatum) protein is Beta-ketoacyl-[acyl-carrier-protein] synthase III.